The primary structure comprises 307 residues: Glycerol-3-phosphate dehydrogenase [NAD(P)+] (307 aa).

NADPH contacts are provided by Trp14, Arg34, Arg35, and Lys82. The sn-glycerol 3-phosphate site is built by Lys82 and Gly110. Ser114 is a binding site for NADPH. Residues Lys165, Asp218, Ser228, Arg229, and Asn230 each coordinate sn-glycerol 3-phosphate. The Proton acceptor role is filled by Lys165. Residue Arg229 coordinates NADPH. Glu255 provides a ligand contact to NADPH.

Belongs to the NAD-dependent glycerol-3-phosphate dehydrogenase family.

The protein localises to the cytoplasm. The enzyme catalyses sn-glycerol 3-phosphate + NAD(+) = dihydroxyacetone phosphate + NADH + H(+). It catalyses the reaction sn-glycerol 3-phosphate + NADP(+) = dihydroxyacetone phosphate + NADPH + H(+). Its pathway is membrane lipid metabolism; glycerophospholipid metabolism. Its function is as follows. Catalyzes the reduction of the glycolytic intermediate dihydroxyacetone phosphate (DHAP) to sn-glycerol 3-phosphate (G3P), the key precursor for phospholipid synthesis. The protein is Glycerol-3-phosphate dehydrogenase [NAD(P)+] of Trichormus variabilis (strain ATCC 29413 / PCC 7937) (Anabaena variabilis).